The primary structure comprises 892 residues: DNA mismatch repair protein MutS (892 aa).

An ATP-binding site is contributed by 607-614 (GPNMSGKS). Positions 833 to 854 (EESQLSFFGGEQSPKKQDKPVL) are disordered. Basic and acidic residues predominate over residues 845–854 (SPKKQDKPVL).

This sequence belongs to the DNA mismatch repair MutS family.

Functionally, this protein is involved in the repair of mismatches in DNA. It is possible that it carries out the mismatch recognition step. This protein has a weak ATPase activity. The protein is DNA mismatch repair protein MutS of Bacillus cereus (strain Q1).